A 231-amino-acid chain; its full sequence is 7-cyano-7-deazaguanine synthase (231 aa).

Residue 11–21 (LSAGLDSTVNA) coordinates ATP. Residues C197, C205, C208, and C211 each coordinate Zn(2+).

The protein belongs to the QueC family. It depends on Zn(2+) as a cofactor.

The enzyme catalyses 7-carboxy-7-deazaguanine + NH4(+) + ATP = 7-cyano-7-deazaguanine + ADP + phosphate + H2O + H(+). It participates in purine metabolism; 7-cyano-7-deazaguanine biosynthesis. Functionally, catalyzes the ATP-dependent conversion of 7-carboxy-7-deazaguanine (CDG) to 7-cyano-7-deazaguanine (preQ(0)). In Bdellovibrio bacteriovorus (strain ATCC 15356 / DSM 50701 / NCIMB 9529 / HD100), this protein is 7-cyano-7-deazaguanine synthase.